Consider the following 89-residue polypeptide: Signal recognition particle 19 kDa protein (89 aa).

This sequence belongs to the SRP19 family. Part of the signal recognition particle protein translocation system, which is composed of SRP and FtsY. Archaeal SRP consists of a 7S RNA molecule of 300 nucleotides and two protein subunits: SRP54 and SRP19.

It localises to the cytoplasm. Involved in targeting and insertion of nascent membrane proteins into the cytoplasmic membrane. Binds directly to 7S RNA and mediates binding of the 54 kDa subunit of the SRP. The polypeptide is Signal recognition particle 19 kDa protein (Methanococcus maripaludis (strain C5 / ATCC BAA-1333)).